Consider the following 351-residue polypeptide: Ferredoxin--NADP reductase (351 aa).

8 residues coordinate FAD: Thr-14, Asp-33, Gln-41, Tyr-46, Ala-86, Phe-121, Asp-287, and Thr-328.

Belongs to the ferredoxin--NADP reductase type 2 family. In terms of assembly, homodimer. The cofactor is FAD.

It carries out the reaction 2 reduced [2Fe-2S]-[ferredoxin] + NADP(+) + H(+) = 2 oxidized [2Fe-2S]-[ferredoxin] + NADPH. This Flavobacterium psychrophilum (strain ATCC 49511 / DSM 21280 / CIP 103535 / JIP02/86) protein is Ferredoxin--NADP reductase.